The sequence spans 187 residues: MENFHGTTIVSVRRGDQVVIGGDGQVTLGDTVMKGNARKVRRLYNGRVLAGFAGATADAFTLFERFESQLEKHRGNLTKAAVELVKDWRTDRMLRRLEALLAIADDKASLIISGNGDVIEPENGLIAIGSGGPFAQSAARALLENTELGARDIVEKSLIIAADICIYTNRNLTIEELETGRNFPNLA.

Thr7 is an active-site residue. Residues Ala162, Cys165, and Thr168 each contribute to the Na(+) site.

This sequence belongs to the peptidase T1B family. HslV subfamily. As to quaternary structure, a double ring-shaped homohexamer of HslV is capped on each side by a ring-shaped HslU homohexamer. The assembly of the HslU/HslV complex is dependent on binding of ATP.

It is found in the cytoplasm. The enzyme catalyses ATP-dependent cleavage of peptide bonds with broad specificity.. With respect to regulation, allosterically activated by HslU binding. In terms of biological role, protease subunit of a proteasome-like degradation complex believed to be a general protein degrading machinery. The polypeptide is ATP-dependent protease subunit HslV (Methylococcus capsulatus (strain ATCC 33009 / NCIMB 11132 / Bath)).